A 439-amino-acid polypeptide reads, in one-letter code: Histidinol dehydrogenase (439 aa).

NAD(+) is bound by residues Y132, Q194, and N217. Substrate is bound by residues S244, Q266, and H269. Zn(2+) contacts are provided by Q266 and H269. Active-site proton acceptor residues include E335 and H336. Residues H336, D369, E423, and H428 each coordinate substrate. D369 contacts Zn(2+). H428 provides a ligand contact to Zn(2+).

This sequence belongs to the histidinol dehydrogenase family. The cofactor is Zn(2+).

It carries out the reaction L-histidinol + 2 NAD(+) + H2O = L-histidine + 2 NADH + 3 H(+). Its pathway is amino-acid biosynthesis; L-histidine biosynthesis; L-histidine from 5-phospho-alpha-D-ribose 1-diphosphate: step 9/9. Its function is as follows. Catalyzes the sequential NAD-dependent oxidations of L-histidinol to L-histidinaldehyde and then to L-histidine. This chain is Histidinol dehydrogenase (his2), found in Schizosaccharomyces pombe (strain 972 / ATCC 24843) (Fission yeast).